A 67-amino-acid polypeptide reads, in one-letter code: MVILNKYYSMKEEYEILNIEIKDDNLFVSVKLIRNGSVEIFNYVPIQNIPKIIKNFSLVTQKNLMDN.

This is an uncharacterized protein from Saccharolobus islandicus (Sulfolobus islandicus).